The sequence spans 369 residues: D-alanine--D-alanine ligase (369 aa).

One can recognise an ATP-grasp domain in the interval 152-359 (KKLFAAEGLP…YPSLLATMVE (208 aa)). 180 to 235 (RERLGLPVFVKPARGGSSIGVSRVSSWDELDAAVAAARDHDPKVIVEAAIAGRELE) serves as a coordination point for ATP. Residues aspartate 314, glutamate 326, and asparagine 328 each coordinate Mg(2+).

Belongs to the D-alanine--D-alanine ligase family. Mg(2+) is required as a cofactor. The cofactor is Mn(2+).

The protein localises to the cytoplasm. The catalysed reaction is 2 D-alanine + ATP = D-alanyl-D-alanine + ADP + phosphate + H(+). It participates in cell wall biogenesis; peptidoglycan biosynthesis. In terms of biological role, cell wall formation. The chain is D-alanine--D-alanine ligase from Mycobacterium avium (strain 104).